A 175-amino-acid polypeptide reads, in one-letter code: Alpha-crystallin B chain (175 aa).

Met-1 carries the post-translational modification N-acetylmethionine. At Ser-19 the chain carries Phosphoserine. O-linked (GlcNAc) serine glycosylation is present at Ser-41. 2 positions are modified to phosphoserine: Ser-45 and Ser-59. The sHSP domain maps to 56 to 164 (RAPSWIDTGL…PERTIPITRE (109 aa)). Position 83 (His-83) interacts with Zn(2+). Residue Lys-92 is modified to N6-acetyllysine. 4 residues coordinate Zn(2+): His-104, Glu-106, His-111, and His-119. Residues 142–175 (VLTVNGPRKQAPGPERTIPITREEKPAVTAAPKK) are disordered. Lys-166 carries the N6-acetyllysine modification. Thr-170 is a glycosylation site (O-linked (GlcNAc) threonine).

The protein belongs to the small heat shock protein (HSP20) family. As to quaternary structure, heteromer composed of three CRYAA and one CRYAB subunits. Aggregates with homologous proteins, including the small heat shock protein HSPB1, to form large heteromeric complexes. Inter-subunit bridging via zinc ions enhances stability, which is crucial as there is no protein turn over in the lens. Interacts with HSPBAP1 and TTN/titin. Interacts with TMEM109; in the cellular response to DNA damage. Interacts with DES; binds rapidly during early stages of DES filament assembly and a reduced binding seen in the later stages. Interacts with TMED10; the interaction mediates the translocation from the cytoplasm into the ERGIC (endoplasmic reticulum-Golgi intermediate compartment) and thereby secretion. Interacts with ATP6V1A and with MTOR, forming a ternary complex. In terms of tissue distribution, lens as well as other tissues.

It localises to the cytoplasm. Its subcellular location is the nucleus. It is found in the secreted. The protein resides in the lysosome. Its function is as follows. May contribute to the transparency and refractive index of the lens. Has chaperone-like activity, preventing aggregation of various proteins under a wide range of stress conditions. In lens epithelial cells, stabilizes the ATP6V1A protein, preventing its degradation by the proteasome. The polypeptide is Alpha-crystallin B chain (CRYAB) (Oryctolagus cuniculus (Rabbit)).